The following is a 345-amino-acid chain: Large ribosomal subunit protein uL10 (345 aa).

A disordered region spans residues 303–345; that stretch reads SLPQTAAPQQTPQPTEAPKEEAQEEKKEGPSEEEIAGSLASLF. A compositionally biased stretch (low complexity) spans 305–318; that stretch reads PQTAAPQQTPQPTE. Residues 319–332 are compositionally biased toward basic and acidic residues; that stretch reads APKEEAQEEKKEGP.

It belongs to the universal ribosomal protein uL10 family. As to quaternary structure, part of the 50S ribosomal subunit. Forms part of the ribosomal stalk which helps the ribosome interact with GTP-bound translation factors. Forms a heptameric L10(L12)2(L12)2(L12)2 complex, where L10 forms an elongated spine to which the L12 dimers bind in a sequential fashion.

In terms of biological role, forms part of the ribosomal stalk, playing a central role in the interaction of the ribosome with GTP-bound translation factors. This is Large ribosomal subunit protein uL10 from Pyrobaculum aerophilum (strain ATCC 51768 / DSM 7523 / JCM 9630 / CIP 104966 / NBRC 100827 / IM2).